Reading from the N-terminus, the 216-residue chain is Somatotropin (216 aa).

The signal sequence occupies residues 1–26; the sequence is MAADSQTPWLLTFSLLCLLWPQEAGA. Histidine 45 lines the Zn(2+) pocket. Cysteine 78 and cysteine 189 form a disulfide bridge. At serine 131 the chain carries Phosphoserine. Glutamate 198 lines the Zn(2+) pocket. A disulfide bridge connects residues cysteine 206 and cysteine 214.

It belongs to the somatotropin/prolactin family.

Its subcellular location is the secreted. Functionally, plays an important role in growth control. Its major role in stimulating body growth is to stimulate the liver and other tissues to secrete IGF1. It stimulates both the differentiation and proliferation of myoblasts. It also stimulates amino acid uptake and protein synthesis in muscle and other tissues. This chain is Somatotropin (Gh1), found in Rattus norvegicus (Rat).